The sequence spans 1180 residues: Nonsense-mediated mRNA decay factor SMG7 (1180 aa).

2 TPR repeats span residues 151–184 (QHCLVHLGDIARYRNQTSQAESYYRHAAQLVPSN) and 186–218 (QPYNQLAILASSKGDHLTTIFYYCRSIAVKFPF). Disordered stretches follow at residues 496–636 (PQEK…TQTT), 692–795 (QTAS…SYMQ), 893–913 (CSDQENMPRGPPYEDNKSSPL), 1019–1127 (SLFE…WAAQ), and 1148–1180 (SSMMQPGPSALEQLLMQQKQKQQRGHGNMNPPH). The segment covering 504 to 520 (LQESSNGEQTPNESTHG) has biased composition (polar residues). Composition is skewed to basic and acidic residues over residues 547–559 (ENIKPREQSREQN), 584–606 (NEQKKEGKRKSEVKKNSHDKTTD), and 615–627 (TELRKTPVSEARK). Residues 692–718 (QTASHPQSANPVQTGKPSHIPYSQQRP) are compositionally biased toward polar residues. Over residues 728–740 (PPQPQQTQPPPPQ) the composition is skewed to pro residues. A compositionally biased stretch (low complexity) spans 741–778 (TSQQALQQSVQLQLQQQQQQQQQQQQQQQQSPTKQSSQ). Polar residues predominate over residues 1026–1038 (WSPSLPASSDHST). Residues 1039 to 1065 (PASQSPHSSNPSSLPSSPPTHSHGSMP) are compositionally biased toward low complexity. The segment covering 1076-1090 (DSRDRRANDRWKAEK) has biased composition (basic and acidic residues). Positions 1103 to 1125 (SASTSSVPETNSWHQGAPTSTWA) are enriched in polar residues.

It localises to the cytoplasm. Its subcellular location is the nucleus. Plays a role in nonsense-mediated mRNA decay. Recruits UPF1 to cytoplasmic mRNA decay bodies. Together with SMG5 is thought to provide a link to the mRNA degradation machinery involving exonucleolytic pathways, and to serve as an adapter for UPF1 to protein phosphatase 2A (PP2A), thereby triggering UPF1 dephosphorylation. Required for normal embryonic development. This Danio rerio (Zebrafish) protein is Nonsense-mediated mRNA decay factor SMG7.